A 395-amino-acid polypeptide reads, in one-letter code: NAD(P)H-quinone oxidoreductase subunit H, chloroplastic (395 aa).

Belongs to the complex I 49 kDa subunit family. NDH is composed of at least 16 different subunits, 5 of which are encoded in the nucleus.

The protein localises to the plastid. Its subcellular location is the chloroplast thylakoid membrane. The enzyme catalyses a plastoquinone + NADH + (n+1) H(+)(in) = a plastoquinol + NAD(+) + n H(+)(out). It catalyses the reaction a plastoquinone + NADPH + (n+1) H(+)(in) = a plastoquinol + NADP(+) + n H(+)(out). NDH shuttles electrons from NAD(P)H:plastoquinone, via FMN and iron-sulfur (Fe-S) centers, to quinones in the photosynthetic chain and possibly in a chloroplast respiratory chain. The immediate electron acceptor for the enzyme in this species is believed to be plastoquinone. Couples the redox reaction to proton translocation, and thus conserves the redox energy in a proton gradient. This is NAD(P)H-quinone oxidoreductase subunit H, chloroplastic from Dioscorea elephantipes (Elephant's foot yam).